The primary structure comprises 273 residues: Anthocyanin regulatory C1 protein (273 aa).

HTH myb-type domains follow at residues 9–65 and 66–116; these read KEGV…RPNI and RRGN…GRRA. 2 consecutive DNA-binding regions (H-T-H motif) follow at residues 37 to 61 and 89 to 112; these read WREVPQKAGLRRCGKSCRLRWLNYL and WSLIAGRLPGRTDNEIKNYWNSTL. Disordered regions lie at residues 137–164 and 196–220; these read ATPAATSGACETGQNSAAHRADPDSAGT and AGETATPMAGGGGGGGGEAGSSDDC. Gly residues predominate over residues 204-214; that stretch reads AGGGGGGGGEA.

The protein resides in the nucleus. Controls the expression of genes involved in anthocyanin biosynthesis. Regulates the expression of at least 3 structural genes: chalcone synthase, dihydroflavonol reductase and flavonol O(3) glucosyltransferase. C1 acts as a trans-acting factor. The chain is Anthocyanin regulatory C1 protein (C1) from Zea mays (Maize).